Here is a 273-residue protein sequence, read N- to C-terminus: 4-hydroxy-tetrahydrodipicolinate reductase (273 aa).

Residues 12 to 17 (GAGGRM) and Glu38 contribute to the NAD(+) site. An NADP(+)-binding site is contributed by Arg39. NAD(+) contacts are provided by residues 102 to 104 (GTT) and 126 to 129 (AANF). The active-site Proton donor/acceptor is His159. His160 contacts (S)-2,3,4,5-tetrahydrodipicolinate. The Proton donor role is filled by Lys163. Residue 169–170 (GT) participates in (S)-2,3,4,5-tetrahydrodipicolinate binding.

Belongs to the DapB family. Homotetramer.

The protein resides in the cytoplasm. It carries out the reaction (S)-2,3,4,5-tetrahydrodipicolinate + NAD(+) + H2O = (2S,4S)-4-hydroxy-2,3,4,5-tetrahydrodipicolinate + NADH + H(+). It catalyses the reaction (S)-2,3,4,5-tetrahydrodipicolinate + NADP(+) + H2O = (2S,4S)-4-hydroxy-2,3,4,5-tetrahydrodipicolinate + NADPH + H(+). The protein operates within amino-acid biosynthesis; L-lysine biosynthesis via DAP pathway; (S)-tetrahydrodipicolinate from L-aspartate: step 4/4. Its function is as follows. Catalyzes the conversion of 4-hydroxy-tetrahydrodipicolinate (HTPA) to tetrahydrodipicolinate. The sequence is that of 4-hydroxy-tetrahydrodipicolinate reductase from Salmonella typhimurium (strain LT2 / SGSC1412 / ATCC 700720).